The following is a 309-amino-acid chain: DnaJ protein ERDJ7 (309 aa).

Positions 1–36 (MSQVGSAGEGSNSMAAAPPPRLLLLVVLLLVPVSNA) are cleaved as a signal peptide. Topologically, residues 37 to 130 (IYCEEDDCYD…YRAYYGHKTD (94 aa)) are lumenal. The 65-residue stretch at 43–107 (DCYDLLGVKQ…STRGQYDYAI (65 aa)) folds into the J domain. The N-linked (GlcNAc...) asparagine glycan is linked to N55. The chain crosses the membrane as a helical span at residues 131-151 (PRAVLIGLLLIISAFQYLNQF). The Cytoplasmic segment spans residues 152–219 (GRYSKAIETV…GVEKPSLWRL (68 aa)). A helical membrane pass occupies residues 220–242 (YGVQFILLPYSIGKVLSWKFCWF). At 243 to 309 (WRYRIKKLPY…EMRKESKRRR (67 aa)) the chain is on the lumenal side.

Its subcellular location is the endoplasmic reticulum membrane. Its function is as follows. May play a role in protein folding in the endoplasmic reticulum. In Oryza sativa subsp. japonica (Rice), this protein is DnaJ protein ERDJ7.